We begin with the raw amino-acid sequence, 1758 residues long: Y' element ATP-dependent helicase YIL177C (1758 aa).

Positions 668 to 845 (EIYMADTPSV…LQRIGLTGLA (178 aa)) constitute a Helicase ATP-binding domain. 681-688 (APPGYGKT) is a binding site for ATP. The Helicase C-terminal domain occupies 900–1051 (ALKLLLALFE…EFYGLESKKG (152 aa)). Positions 1142–1360 (NVRTNATTNA…ATTTESTNAS (219 aa)) are enriched in low complexity. The interval 1142-1384 (NVRTNATTNA…RFHPVTDINK (243 aa)) is disordered. A compositionally biased stretch (basic and acidic residues) spans 1361–1384 (AKEDANKDGNAEDNRFHPVTDINK).

Belongs to the helicase family. Yeast subtelomeric Y' repeat subfamily.

Functionally, catalyzes DNA unwinding and is involved in telomerase-independent telomere maintenance. This is Y' element ATP-dependent helicase YIL177C from Saccharomyces cerevisiae (strain ATCC 204508 / S288c) (Baker's yeast).